The primary structure comprises 205 residues: Beta-crystallin B2 (205 aa).

Ala-2 carries the N-acetylalanine modification. The N-terminal arm stretch occupies residues 2–16 (ASDHQSPATKQQQPS). Beta/gamma crystallin 'Greek key' domains follow at residues 17–56 (SKIVLFEQENFQGRCHELSGPCTSLKEAGMEKIGSILVHS) and 57–101 (GPWV…RPIK). The interval 102 to 106 (VDSQE) is connecting peptide. 2 consecutive Beta/gamma crystallin 'Greek key' domains span residues 107–148 (HKIV…RVQS) and 149–191 (GTWV…RRIR). The tract at residues 193 to 205 (MQWHQRGTFHPTN) is C-terminal arm.

Belongs to the beta/gamma-crystallin family. In terms of assembly, homo/heterodimer, or complexes of higher-order. The structure of beta-crystallin oligomers seems to be stabilized through interactions between the N-terminal arms. In terms of processing, the N-terminus is blocked.

Functionally, crystallins are the dominant structural components of the vertebrate eye lens. The protein is Beta-crystallin B2 of Aquarana catesbeiana (American bullfrog).